A 274-amino-acid polypeptide reads, in one-letter code: Cytochrome b-c1 complex subunit Rieske, mitochondrial (274 aa).

Residues 79–103 (SHTDIKVPDFSDYRRSEVLDKTKSS) are Mitochondrial matrix-facing. A helical transmembrane segment spans residues 104-140 (RESSDARKGFSYLVTAATAVGVTYAAKSIVTQFVSSM). Topologically, residues 141 to 274 (SASADVLAMS…FTGDDMVIVG (134 aa)) are mitochondrial intermembrane. Positions 187–272 (EAAVELSQLR…YEFTGDDMVI (86 aa)) constitute a Rieske domain. Residues Cys217, His219, Cys236, His239, and Ser241 each contribute to the [2Fe-2S] cluster site. Cys222 and Cys238 form a disulfide bridge.

It belongs to the Rieske iron-sulfur protein family. Component of the ubiquinol-cytochrome c oxidoreductase (cytochrome b-c1 complex, complex III, CIII), a multisubunit enzyme composed of 11 subunits. The complex is composed of 3 respiratory subunits cytochrome b, cytochrome c1 and Rieske protein UQCRFS1, 2 core protein subunits UQCRC1/QCR1 and UQCRC2/QCR2, and 6 low-molecular weight protein subunits UQCRH/QCR6, UQCRB/QCR7, UQCRQ/QCR8, UQCR10/QCR9, UQCR11/QCR10 and subunit 9, the cleavage product of Rieske protein UQCRFS1. The complex exists as an obligatory dimer and forms supercomplexes (SCs) in the inner mitochondrial membrane with NADH-ubiquinone oxidoreductase (complex I, CI) and cytochrome c oxidase (complex IV, CIV), resulting in different assemblies (supercomplex SCI(1)III(2)IV(1) and megacomplex MCI(2)III(2)IV(2)). Incorporation of the Rieske protein UQCRFS1 is the penultimate step in complex III assembly. Interacts with TTC19, which is involved in the clearance of UQCRFS1 fragments. As to quaternary structure, component of the ubiquinol-cytochrome c oxidoreductase (cytochrome b-c1 complex, complex III, CIII). Subunit 9 corresponds to the mitochondrial targeting sequence (MTS) of Rieske protein UQCRFS1. It is retained after processing and incorporated inside complex III, where it remains bound to the complex and localizes between the 2 core subunits UQCRC1/QCR1 and UQCRC2/QCR2. Requires [2Fe-2S] cluster as cofactor. In terms of processing, proteolytic processing is necessary for the correct insertion of UQCRFS1 in the complex III dimer. Several fragments are generated during UQCRFS1 insertion, most probably due to the endogenous matrix-processing peptidase (MPP) activity of the 2 core protein subunits UQCRC1/QCR1 and UQCRC2/QCR2, which are homologous to the 2 mitochondrial-processing peptidase (MPP) subunits beta-MPP and alpha-MPP respectively. The action of the protease is also necessary for the clearance of the UQCRFS1 fragments.

It localises to the mitochondrion inner membrane. The enzyme catalyses a quinol + 2 Fe(III)-[cytochrome c](out) = a quinone + 2 Fe(II)-[cytochrome c](out) + 2 H(+)(out). Its function is as follows. Component of the ubiquinol-cytochrome c oxidoreductase, a multisubunit transmembrane complex that is part of the mitochondrial electron transport chain which drives oxidative phosphorylation. The respiratory chain contains 3 multisubunit complexes succinate dehydrogenase (complex II, CII), ubiquinol-cytochrome c oxidoreductase (cytochrome b-c1 complex, complex III, CIII) and cytochrome c oxidase (complex IV, CIV), that cooperate to transfer electrons derived from NADH and succinate to molecular oxygen, creating an electrochemical gradient over the inner membrane that drives transmembrane transport and the ATP synthase. The cytochrome b-c1 complex catalyzes electron transfer from ubiquinol to cytochrome c, linking this redox reaction to translocation of protons across the mitochondrial inner membrane, with protons being carried across the membrane as hydrogens on the quinol. In the process called Q cycle, 2 protons are consumed from the matrix, 4 protons are released into the intermembrane space and 2 electrons are passed to cytochrome c. The Rieske protein is a catalytic core subunit containing a [2Fe-2S] iron-sulfur cluster. It cycles between 2 conformational states during catalysis to transfer electrons from the quinol bound in the Q(0) site in cytochrome b to cytochrome c1. Incorporation of UQCRFS1 is the penultimate step in complex III assembly. Functionally, component of the ubiquinol-cytochrome c oxidoreductase (cytochrome b-c1 complex, complex III, CIII). UQCRFS1 undergoes proteolytic processing once it is incorporated in the complex III dimer. One of the fragments, called subunit 9, corresponds to its mitochondrial targeting sequence (MTS). The proteolytic processing is necessary for the correct insertion of UQCRFS1 in the complex III dimer, but the persistence of UQCRFS1-derived fragments may prevent newly imported UQCRFS1 to be processed and assembled into complex III and is detrimental for the complex III structure and function. This is Cytochrome b-c1 complex subunit Rieske, mitochondrial (UQCRFS1) from Lagothrix lagotricha (Brown woolly monkey).